The sequence spans 122 residues: Urocortin (122 aa).

The N-terminal stretch at 1–25 (MIQRGRATLLVALLLLAQLRPESSQ) is a signal peptide. Residues 26-80 (WSPAAAAATGVQDPNLRWSPGVRNQGGGVRALLLLLAERFPRRAGSEPAGERQRR) constitute a propeptide that is removed on maturation. The residue at position 120 (Val-120) is a Valine amide.

This sequence belongs to the sauvagine/corticotropin-releasing factor/urotensin I family. Interacts with CRHR1 and CRHR2 (via their N-terminal extracellular domain). As to expression, in the organ of Corti, detected in the inner hair cell region (at protein level). Expressed in skin (at protein level).

The protein localises to the secreted. In terms of biological role, acts in vitro to stimulate the secretion of adrenocorticotropic hormone (ACTH). Binds with high affinity to CRF receptor types 1, 2-alpha, and 2-beta. Plays a role in the establishment of normal hearing thresholds. Reduces food intake and regulates ghrelin levels in gastric body and plasma. This Mus musculus (Mouse) protein is Urocortin (Ucn).